A 367-amino-acid polypeptide reads, in one-letter code: uncharacterized protein (367 aa).

A disordered region spans residues 333–367 (RERRPTLNAQRAHAAAQQQPRRRNRRQQGTGASAS). Positions 341–351 (AQRAHAAAQQQ) are enriched in low complexity.

This is an uncharacterized protein from Amazona oratrix (yellow-headed parrot).